We begin with the raw amino-acid sequence, 299 residues long: 4-sulfomuconolactone hydrolase (299 aa).

Belongs to the metallo-dependent hydrolases superfamily. Sulfomuconolactone hydrolase family. As to quaternary structure, monomer. It depends on Zn(2+) as a cofactor.

It carries out the reaction 4-sulfomuconolactone + H2O = maleylacetate + sulfite + 2 H(+). Functionally, involved in the degradation of 4-sulfocatechol which is a central intermediate in the degradation of substituted sulfonated benzenes. Catalyzes the hydrolytical desulfonation of 4-sulfomuconolactone to yield maleylacetate. The chain is 4-sulfomuconolactone hydrolase from Rhizobium radiobacter (Agrobacterium tumefaciens).